The sequence spans 127 residues: uncharacterized protein (127 aa).

Helical transmembrane passes span 13–35 and 57–81; these read ILLL…GIIF and AVLI…IMIW.

Its subcellular location is the cell membrane. This is an uncharacterized protein from Mycoplasma genitalium (strain ATCC 33530 / DSM 19775 / NCTC 10195 / G37) (Mycoplasmoides genitalium).